The primary structure comprises 485 residues: Delta(14)-sterol reductase ERG24A (485 aa).

4 helical membrane-spanning segments follow: residues 18 to 38 (FFGP…VYVF), 77 to 97 (GLVS…SLIL), 131 to 151 (LAVL…WTFM), and 155 to 175 (FIQI…FVYV). N-linked (GlcNAc...) asparagine glycosylation is present at asparagine 240. The next 4 helical transmembrane spans lie at 259–279 (ILIT…EPAI), 285–305 (ITTD…VPYV), 319–339 (SLGP…FYIF), and 431–451 (AQGW…ILLI).

Belongs to the ERG4/ERG24 family.

It is found in the endoplasmic reticulum membrane. It catalyses the reaction 4,4-dimethyl-5alpha-cholesta-8,24-dien-3beta-ol + NADP(+) = 4,4-dimethyl-5alpha-cholesta-8,14,24-trien-3beta-ol + NADPH + H(+). The protein operates within steroid metabolism; ergosterol biosynthesis. In terms of biological role, delta(14)-sterol reductase; part of the third module of ergosterol biosynthesis pathway that includes the late steps of the pathway. Catalyzes the reduction of the C14=C15 double bond within 4,4,24-trimethyl ergosta-8,14,24(28)-trienolto produce 4,4-dimethylfecosterol. The third module or late pathway involves the ergosterol synthesis itself through consecutive reactions that mainly occur in the endoplasmic reticulum (ER) membrane. Firstly, the squalene synthase ERG9 catalyzes the condensation of 2 farnesyl pyrophosphate moieties to form squalene, which is the precursor of all steroids. Squalene synthase is crucial for balancing the incorporation of farnesyl diphosphate (FPP) into sterol and nonsterol isoprene synthesis. Secondly, squalene is converted into lanosterol by the consecutive action of the squalene epoxidase ERG1 and the lanosterol synthase ERG7. Then, the delta(24)-sterol C-methyltransferase ERG6 methylates lanosterol at C-24 to produce eburicol. Eburicol is the substrate of the sterol 14-alpha demethylase encoded by CYP51A, CYP51B and CYP51C, to yield 4,4,24-trimethyl ergosta-8,14,24(28)-trienol. CYP51B encodes the enzyme primarily responsible for sterol 14-alpha-demethylation, and plays an essential role in ascospore formation. CYP51A encodes an additional sterol 14-alpha-demethylase, induced on ergosterol depletion and responsible for the intrinsic variation in azole sensitivity. The third CYP51 isoform, CYP51C, does not encode a sterol 14-alpha-demethylase, but is required for full virulence on host wheat ears. The C-14 reductase ERG24 then reduces the C14=C15 double bond which leads to 4,4-dimethylfecosterol. A sequence of further demethylations at C-4, involving the C-4 demethylation complex containing the C-4 methylsterol oxidases ERG25, the sterol-4-alpha-carboxylate 3-dehydrogenase ERG26 and the 3-keto-steroid reductase ERG27, leads to the production of fecosterol via 4-methylfecosterol. ERG28 has a role as a scaffold to help anchor ERG25, ERG26 and ERG27 to the endoplasmic reticulum. The C-8 sterol isomerase ERG2 then catalyzes the reaction which results in unsaturation at C-7 in the B ring of sterols and thus converts fecosterol to episterol. The sterol-C5-desaturases ERG3A and ERG3BB then catalyze the introduction of a C-5 double bond in the B ring to produce 5-dehydroepisterol. The C-22 sterol desaturases ERG5A and ERG5B further convert 5-dehydroepisterol into ergosta-5,7,22,24(28)-tetraen-3beta-ol by forming the C-22(23) double bond in the sterol side chain. Finally, ergosta-5,7,22,24(28)-tetraen-3beta-ol is substrate of the C-24(28) sterol reductase ERG4 to produce ergosterol. This is Delta(14)-sterol reductase ERG24A from Gibberella zeae (strain ATCC MYA-4620 / CBS 123657 / FGSC 9075 / NRRL 31084 / PH-1) (Wheat head blight fungus).